A 358-amino-acid chain; its full sequence is Alanine racemase (358 aa).

The Proton acceptor; specific for D-alanine role is filled by K34. K34 carries the N6-(pyridoxal phosphate)lysine modification. R129 is a substrate binding site. Y254 (proton acceptor; specific for L-alanine) is an active-site residue. M302 is a substrate binding site.

Belongs to the alanine racemase family. It depends on pyridoxal 5'-phosphate as a cofactor.

The enzyme catalyses L-alanine = D-alanine. The protein operates within amino-acid biosynthesis; D-alanine biosynthesis; D-alanine from L-alanine: step 1/1. Functionally, catalyzes the interconversion of L-alanine and D-alanine. May also act on other amino acids. The sequence is that of Alanine racemase (alr) from Vibrio atlanticus (strain LGP32) (Vibrio splendidus (strain Mel32)).